Reading from the N-terminus, the 411-residue chain is Inhibin beta B chain (411 aa).

The signal sequence occupies residues 1–28; that stretch reads MDGLPGRALGAACLLLLAAGWLGPEAWG. Residues 27 to 69 form a disordered region; sequence WGSPTPPPSPAAPPPPPPPGAPGGSQDTCTSCGGGGGGFRRPE. The propeptide occupies 29-296; the sequence is SPTPPPSPAA…GDSRHRIRKR (268 aa). The segment covering 30-47 has biased composition (pro residues); that stretch reads PTPPPSPAAPPPPPPPGA. N97 carries N-linked (GlcNAc...) asparagine glycosylation. 4 disulfide bridges follow: C300–C308, C307–C376, C336–C408, and C340–C410.

This sequence belongs to the TGF-beta family. As to quaternary structure, dimeric, linked by one or more disulfide bonds. Inhibin B is a dimer of alpha and beta-B. Activin B is a homodimer of beta-B. Activin AB is a dimer of beta-A and beta-B. Interacts with FST and FSTL3. As to expression, alpha- and beta-B subunits are the predominant forms found in rat testis. Also expressed in ovary.

The protein localises to the secreted. In terms of biological role, inhibins and activins inhibit and activate, respectively, the secretion of follitropin by the pituitary gland. Inhibins/activins are involved in regulating a number of diverse functions such as hypothalamic and pituitary hormone secretion, gonadal hormone secretion, germ cell development and maturation, erythroid differentiation, insulin secretion, nerve cell survival, embryonic axial development or bone growth, depending on their subunit composition. Inhibins appear to oppose the functions of activins. Its function is as follows. Activin B is a dimer of alpha and beta-B that plays a role in several essential biological processes including embryonic development, stem cell maintenance and differentiation, haematopoiesis, cell proliferation and wound healing. Signals through type I receptor ACVR1C, abundantly expressed in pancreatic beta cells, and type II receptors like ACVR2A. Upon ligand binding, these receptors phosphorylate intracellular signaling mediators SMAD2 and SMAD3, which form a complex with SMAD4, translocate to the nucleus, and regulate gene expression. Plays a crucial role in the induction of hepcidin by inflammation through activation of ACVR1C and subsequent phosphorylation of SMAD1/5/8. Regulates adipocyte lipid metabolism by decreasing non-esterified fatty acids and glycerol release and increases intracellular triglyceride content. Stimulates wound healing by promoting cell migration and hair follicle regeneration through the JNK and ERK signaling pathways downstream of RHOA. Functionally, inhibin B is a dimer of alpha and beta-B that plays a crucial role in the regulation of the reproductive system by inhibiting the secretion of follicle-stimulating hormone (FSH) from the anterior pituitary gland. Thereby, maintains reproductive homeostasis in both males and females. Acts as a more potent suppressor of FSH release than inhibin A. Functions as competitive receptor antagonist binding activin type II receptors with high affinity in the presence of the TGF-beta type III coreceptor/TGFBR3L. The chain is Inhibin beta B chain (Inhbb) from Rattus norvegicus (Rat).